Consider the following 187-residue polypeptide: Early nodulin-55-2 (187 aa).

The first 26 residues, 1–26, serve as a signal peptide directing secretion; that stretch reads MASCLPNASPFLVMLAMCLLISTSEA. Residues 27–132 enclose the Phytocyanin domain; it reads EKYVVGGSEK…GLKLAVLVIS (106 aa). Residues Asn-78, Asn-116, and Asn-134 are each glycosylated (N-linked (GlcNAc...) asparagine). Cys-85 and Cys-120 are disulfide-bonded. Residues 138–167 are disordered; the sequence is KNLLSPSPSPSPPPSSLLSPSPSPLPNNQG. Residues 144-162 are compositionally biased toward pro residues; that stretch reads SPSPSPPPSSLLSPSPSPL.

It belongs to the early nodulin-like (ENODL) family.

The protein localises to the symbiosome. Its subcellular location is the peribacteroid membrane. Its function is as follows. May act as a carbohydrate transporter. The chain is Early nodulin-55-2 from Glycine max (Soybean).